Reading from the N-terminus, the 21-residue chain is thr operon leader peptide (21 aa).

Belongs to the thr operon leader peptide family.

This protein is involved in control of the biosynthesis of threonine. The chain is thr operon leader peptide from Shigella boydii serotype 18 (strain CDC 3083-94 / BS512).